Here is a 91-residue protein sequence, read N- to C-terminus: Progonadoliberin-1 (91 aa).

An N-terminal signal peptide occupies residues 1 to 21; it reads MVVKTWMPWLLVSSVLSQGCC. Pyrrolidone carboxylic acid is present on glutamine 22. Glycine 31 carries the post-translational modification Glycine amide.

Belongs to the GnRH family. Expressed in the cell bodies of a cluster of neurons in the preoptic region.

It is found in the secreted. Stimulates the secretion of gonadotropins. The chain is Progonadoliberin-1 (gnrh1) from Oryzias latipes (Japanese rice fish).